Consider the following 208-residue polypeptide: Inactive ribonuclease-like protein 10 (208 aa).

An N-terminal signal peptide occupies residues 1 to 24; the sequence is MKVTLVHLLFMMLLLLLGLGLGLG. 2 N-linked (GlcNAc...) asparagine glycosylation sites follow: Asn-125 and Asn-147.

It belongs to the pancreatic ribonuclease family. The N-terminus is blocked. Glycosylated. As to expression, male-specific expression in proximal caput of the epididymis (at protein level).

The protein resides in the secreted. Functionally, secreted proximal epididymal protein required for post-testicular sperm maturation and male fertility. May be involved in sperm adhesion to the egg zona pellucida. Does not have ribonuclease activity. The polypeptide is Inactive ribonuclease-like protein 10 (Rnase10) (Mus musculus (Mouse)).